A 536-amino-acid polypeptide reads, in one-letter code: Caspase A (536 aa).

A propeptide spans 1 to 273 (MVLKTIEDNC…DSQSRMPRTD (273 aa)) (removed in mature form by autoprocessing). Active-site residues include histidine 364 and cysteine 406.

This sequence belongs to the peptidase C14A family. As to quaternary structure, heterodimer formed by the tight association of the large subunit p16 and the small subunit p14. In terms of processing, autocatalytic cleavage removes the propeptide and generates the two active subunits p16 and p14 in vitro. Cannot be cleaved by ced-3 in vitro. Isoform a: Expression is restricted to the late germline pachytene stage of meiosis I in both L4 larvae and adult hermaphrodite gonads. Isoform b: Expression is restricted to the late germline pachytene stage of meiosis I in both L4 larvae and adult hermaphrodite gonads.

It carries out the reaction Strict requirement for an Asp residue at position P1 and has a preferred cleavage sequence of Tyr-Val-Ala-Asp-|-.. Inhibited by cysteine protease inhibitor iodoacetic acid (CH3COOI) but not by N-[N-(L-3-transcarboxirane-2-carbonyl)-leucyl]-agmatine (E-64) or benzyloxycarbonyl-DEVD-fluoro-methyl ketone (Z-DEVD-FMK). Functionally, cysteine protease which, in vitro, cleaves itself and caspase ced-3 into their mature active forms. Also cleaves, in vitro, inactive caspase csp-2 isoform b. Required maternally to induce apoptosis in a subset of cells fated to die during embryogenesis, mostly independently of the ced-9, ced-4 and ced-3 canonical apoptosis pathway. Involved in the degeneration of dopaminergic CEP neurons in response to high Mn(2+) levels. Dispensable for regulating apoptosis during embryogenesis. The sequence is that of Caspase A from Caenorhabditis elegans.